The sequence spans 445 residues: Phosphoglucosamine mutase (445 aa).

The active-site Phosphoserine intermediate is serine 99. Mg(2+) contacts are provided by serine 99, aspartate 242, aspartate 244, and aspartate 246. Serine 99 is subject to Phosphoserine.

This sequence belongs to the phosphohexose mutase family. Mg(2+) is required as a cofactor. Post-translationally, activated by phosphorylation.

It catalyses the reaction alpha-D-glucosamine 1-phosphate = D-glucosamine 6-phosphate. In terms of biological role, catalyzes the conversion of glucosamine-6-phosphate to glucosamine-1-phosphate. In Helicobacter acinonychis (strain Sheeba), this protein is Phosphoglucosamine mutase.